Reading from the N-terminus, the 506-residue chain is Pisatin demethylase (506 aa).

Cysteine 453 contributes to the heme binding site.

It belongs to the cytochrome P450 family. It depends on heme as a cofactor.

Functionally, can detoxify the phytoalexin pisatin from garden pea. Pisatin is an antimicrobial compound produced by pea in response to infection by plant pathogens. This is Pisatin demethylase (PDA6-1) from Fusarium vanettenii (Neocosmospora pisi).